Here is a 447-residue protein sequence, read N- to C-terminus: Probable arabinosyltransferase ARAD1 (447 aa).

The Cytoplasmic portion of the chain corresponds to 1-6; sequence MARKSS. The helical; Signal-anchor for type II membrane protein transmembrane segment at 7–29 threads the bilayer; the sequence is LLKRAAIAVVSVIAIYVILNASV. At 30–447 the chain is on the lumenal side; it reads SRSLPSSSDL…TNQTGLITSI (418 aa). Low complexity predominate over residues 32–41; the sequence is SLPSSSDLPR. The segment at 32–52 is disordered; it reads SLPSSSDLPRQLIREDDDDEG. 3 N-linked (GlcNAc...) asparagine glycosylation sites follow: asparagine 427, asparagine 432, and asparagine 439.

This sequence belongs to the glycosyltransferase 47 family. Homodimer and heterodimer with ARAD2. In terms of tissue distribution, expressed in root vasculature, cotyledons, leaves, stems, vascular tissue of sepals, petals and stamens, pollen grains, mature siliques and abscission region of seeds.

It is found in the golgi apparatus membrane. Probable arabinosyl transferase responsible for the polymerization of arabinose into the arabinan of arabinogalactan. May function as inverting enzyme using UDP-beta-L-arabinopyranoside. May be important for arabinan side chains of rhamnogalacturonan I (RG-I), a major component of pectins. Cell wall pectic arabinans are involved in thigmomorphogenesis response of inflorescence stems to mechanical stress. In Arabidopsis thaliana (Mouse-ear cress), this protein is Probable arabinosyltransferase ARAD1 (ARAD1).